The chain runs to 234 residues: Ubiquinone biosynthesis O-methyltransferase (234 aa).

R40, G59, D80, and M123 together coordinate S-adenosyl-L-methionine.

Belongs to the methyltransferase superfamily. UbiG/COQ3 family.

It carries out the reaction a 3-demethylubiquinol + S-adenosyl-L-methionine = a ubiquinol + S-adenosyl-L-homocysteine + H(+). The catalysed reaction is a 3-(all-trans-polyprenyl)benzene-1,2-diol + S-adenosyl-L-methionine = a 2-methoxy-6-(all-trans-polyprenyl)phenol + S-adenosyl-L-homocysteine + H(+). The protein operates within cofactor biosynthesis; ubiquinone biosynthesis. Functionally, O-methyltransferase that catalyzes the 2 O-methylation steps in the ubiquinone biosynthetic pathway. This Coxiella burnetii (strain CbuG_Q212) (Coxiella burnetii (strain Q212)) protein is Ubiquinone biosynthesis O-methyltransferase.